Reading from the N-terminus, the 55-residue chain is Large ribosomal subunit protein bL33 (55 aa).

The protein belongs to the bacterial ribosomal protein bL33 family.

The protein is Large ribosomal subunit protein bL33 of Burkholderia cenocepacia (strain ATCC BAA-245 / DSM 16553 / LMG 16656 / NCTC 13227 / J2315 / CF5610) (Burkholderia cepacia (strain J2315)).